We begin with the raw amino-acid sequence, 396 residues long: Probable sugar efflux transporter (396 aa).

12 consecutive transmembrane segments (helical) span residues 15–35 (VVTLAVAAFIFNTTEFVPVGL), 50–70 (VGIMLTIYAWVVALMSLPFML), 81–101 (LICLFVVFIASHVLSFLSWSF), 103–123 (VLVISRIGVAFAHAIFWSITA), 136–156 (AQALSLIATGTALAMVLGLPL), 170–190 (FFAIGIGAFITLLCLIKLLPL), 209–229 (PALMSIYLLTVVVVTAHYTAY), 246–266 (FATALLLLLGGAGIIGSVIFG), 275–295 (ALVSTAIALLLVCLALLLPAA), 299–319 (IHLGVLSIFWGIAMMIIGLGM), 333–353 (VAMALFSGIFNIGIGAGALVG), and 364–384 (MIGYVGAVPAFAALIWSIIIF).

This sequence belongs to the major facilitator superfamily. SotB (TC 2.A.1.2) family.

It localises to the cell inner membrane. Involved in the efflux of sugars. The physiological role may be the reduction of the intracellular concentration of toxic sugars or sugar metabolites. This is Probable sugar efflux transporter from Escherichia coli O17:K52:H18 (strain UMN026 / ExPEC).